The sequence spans 451 residues: Adenylosuccinate synthetase isozyme 2 (451 aa).

Residues 34-40 (GDEGKGK) and 62-64 (GHT) contribute to the GTP site. Asp-35 (proton acceptor) is an active-site residue. Mg(2+) is bound by residues Asp-35 and Gly-62. Substrate is bound at residue Asp-35. Residues 35 to 38 (DEGK), 60 to 63 (NAGH), Thr-157, Arg-171, Asn-250, Thr-265, and Arg-329 each bind IMP. Residue His-63 is the Proton donor of the active site. Substrate is bound at residue 325–331 (VTTGRKR). Residues Arg-331, 357-359 (KLD), and 439-442 (GVGK) contribute to the GTP site.

Belongs to the adenylosuccinate synthetase family. Homodimer. It depends on Mg(2+) as a cofactor.

It is found in the cytoplasm. The protein resides in the mitochondrion. It catalyses the reaction IMP + L-aspartate + GTP = N(6)-(1,2-dicarboxyethyl)-AMP + GDP + phosphate + 2 H(+). It functions in the pathway purine metabolism; AMP biosynthesis via de novo pathway; AMP from IMP: step 1/2. With respect to regulation, inhibited competitively by AMP and IMP and non-competitively by fructose 1,6-bisphosphate. In terms of biological role, plays an important role in the de novo pathway and in the salvage pathway of purine nucleotide biosynthesis. Catalyzes the first committed step in the biosynthesis of AMP from IMP. In Gallus gallus (Chicken), this protein is Adenylosuccinate synthetase isozyme 2.